The primary structure comprises 325 residues: Tetraacyldisaccharide 4'-kinase (325 aa).

Position 58-65 (58-65 (TVGGSGKT)) interacts with ATP.

Belongs to the LpxK family.

It carries out the reaction a lipid A disaccharide + ATP = a lipid IVA + ADP + H(+). The protein operates within glycolipid biosynthesis; lipid IV(A) biosynthesis; lipid IV(A) from (3R)-3-hydroxytetradecanoyl-[acyl-carrier-protein] and UDP-N-acetyl-alpha-D-glucosamine: step 6/6. In terms of biological role, transfers the gamma-phosphate of ATP to the 4'-position of a tetraacyldisaccharide 1-phosphate intermediate (termed DS-1-P) to form tetraacyldisaccharide 1,4'-bis-phosphate (lipid IVA). The sequence is that of Tetraacyldisaccharide 4'-kinase from Coxiella burnetii (strain CbuK_Q154) (Coxiella burnetii (strain Q154)).